A 690-amino-acid chain; its full sequence is Wilms tumor protein 1-interacting protein homolog (690 aa).

Disordered stretches follow at residues 151 to 316 (MSAT…VSPR) and 328 to 372 (TLGS…PRSS). Over residues 152–186 (SATSPRSSMASSASSSQEHSKYSSPRSSISSNALS) the composition is skewed to low complexity. Composition is skewed to polar residues over residues 204–214 (EKYTSPRSSLG), 223–233 (PRSSYASTTSD), 240–261 (PRAS…TSGI), and 272–292 (PRSS…SYSD). Positions 335 to 357 (SVVSPRSSISSHSSRSSRSSRGS) are enriched in low complexity. 3 LIM zinc-binding domains span residues 479–540 (GICI…SGFQ), 544–603 (DKCF…TVFA), and 604–673 (PKCA…RLSV).

This sequence belongs to the zyxin/ajuba family. In terms of assembly, interacts with prickle3.

Its subcellular location is the cell junction. It is found in the adherens junction. The protein resides in the nucleus. In terms of biological role, may monitor slit diaphragm protein assembly, a specialized adherens junction characteristic of podocytes. In case of podocyte injury, it shuttles into the nucleus and acts as a transcription regulator. Plays a role in the regulation of cell morphology and cytoskeletal organization. Acts as a transcriptional corepressor for snai1 and snai2/slug and plays a role in regulating neural crest development. Involved in the organization of the basal body. Involved in cilia growth and positioning. The protein is Wilms tumor protein 1-interacting protein homolog (wtip) of Xenopus laevis (African clawed frog).